Here is a 475-residue protein sequence, read N- to C-terminus: Adenosylhomocysteinase (475 aa).

Substrate contacts are provided by Thr-61, Asp-140, and Glu-200. An NAD(+)-binding site is contributed by 201–203 (TTT). 2 residues coordinate substrate: Lys-230 and Asp-234. NAD(+) is bound by residues Asn-235, 264–269 (GYGDVG), Glu-287, Asn-322, 343–345 (IGH), and Asn-388.

Belongs to the adenosylhomocysteinase family. It depends on NAD(+) as a cofactor.

Its subcellular location is the cytoplasm. It catalyses the reaction S-adenosyl-L-homocysteine + H2O = L-homocysteine + adenosine. It functions in the pathway amino-acid biosynthesis; L-homocysteine biosynthesis; L-homocysteine from S-adenosyl-L-homocysteine: step 1/1. In terms of biological role, may play a key role in the regulation of the intracellular concentration of adenosylhomocysteine. This chain is Adenosylhomocysteinase, found in Paracidovorax citrulli (strain AAC00-1) (Acidovorax citrulli).